The chain runs to 173 residues: Probable chemoreceptor glutamine deamidase CheD 2 (173 aa).

The protein belongs to the CheD family.

The enzyme catalyses L-glutaminyl-[protein] + H2O = L-glutamyl-[protein] + NH4(+). In terms of biological role, probably deamidates glutamine residues to glutamate on methyl-accepting chemotaxis receptors (MCPs), playing an important role in chemotaxis. This chain is Probable chemoreceptor glutamine deamidase CheD 2, found in Albidiferax ferrireducens (strain ATCC BAA-621 / DSM 15236 / T118) (Rhodoferax ferrireducens).